The sequence spans 390 residues: Protein TAB2 homolog, chloroplastic (390 aa).

A chloroplast-targeting transit peptide spans 1–69; sequence MTTATAIVAG…RSISSESSTE (69 aa). A disordered region spans residues 16-85; it reads RRSLPLPNPP…IADEEVEAEN (70 aa). Low complexity predominate over residues 61–75; sequence SISSESSTEASAAAD.

It localises to the plastid. The protein localises to the chloroplast. Its function is as follows. Nuclear genome-encoded factor involved in the biogenesis of photosystem I (PSI). Required for the accumulation of PSI during plant development. Does not seem to be required for the translation of mRNAs of the PSI subunits. The sequence is that of Protein TAB2 homolog, chloroplastic from Zea mays (Maize).